A 187-amino-acid chain; its full sequence is UPF0340 protein SPN23F05980 (187 aa).

This sequence belongs to the UPF0340 family.

The polypeptide is UPF0340 protein SPN23F05980 (Streptococcus pneumoniae (strain ATCC 700669 / Spain 23F-1)).